The following is a 568-amino-acid chain: Peptidoglycan D,D-transpeptidase FtsI (568 aa).

The helical transmembrane segment at Phe-19–Phe-39 threads the bilayer. The active-site Acyl-ester intermediate is Ser-302.

This sequence belongs to the transpeptidase family. FtsI subfamily.

It is found in the cell inner membrane. It carries out the reaction Preferential cleavage: (Ac)2-L-Lys-D-Ala-|-D-Ala. Also transpeptidation of peptidyl-alanyl moieties that are N-acyl substituents of D-alanine.. Its pathway is cell wall biogenesis; peptidoglycan biosynthesis. Functionally, catalyzes cross-linking of the peptidoglycan cell wall at the division septum. The chain is Peptidoglycan D,D-transpeptidase FtsI from Buchnera aphidicola subsp. Schizaphis graminum (strain Sg).